A 560-amino-acid chain; its full sequence is Formate--tetrahydrofolate ligase (560 aa).

Position 69-76 (69-76 (TPAGEGKS)) interacts with ATP.

The protein belongs to the formate--tetrahydrofolate ligase family.

The catalysed reaction is (6S)-5,6,7,8-tetrahydrofolate + formate + ATP = (6R)-10-formyltetrahydrofolate + ADP + phosphate. It functions in the pathway one-carbon metabolism; tetrahydrofolate interconversion. The sequence is that of Formate--tetrahydrofolate ligase from Listeria monocytogenes serovar 1/2a (strain ATCC BAA-679 / EGD-e).